The primary structure comprises 563 residues: Arginine--tRNA ligase (563 aa).

A 'HIGH' region motif is present at residues 120–130 (PNIAKPFHVGH).

Belongs to the class-I aminoacyl-tRNA synthetase family. As to quaternary structure, monomer.

Its subcellular location is the cytoplasm. The enzyme catalyses tRNA(Arg) + L-arginine + ATP = L-arginyl-tRNA(Arg) + AMP + diphosphate. The sequence is that of Arginine--tRNA ligase from Clostridium acetobutylicum (strain ATCC 824 / DSM 792 / JCM 1419 / IAM 19013 / LMG 5710 / NBRC 13948 / NRRL B-527 / VKM B-1787 / 2291 / W).